A 115-amino-acid polypeptide reads, in one-letter code: Aspartate 1-decarboxylase (115 aa).

Ser-25 functions as the Schiff-base intermediate with substrate; via pyruvic acid in the catalytic mechanism. Ser-25 carries the pyruvic acid (Ser) modification. Residue Thr-57 coordinates substrate. Tyr-58 acts as the Proton donor in catalysis. 71-73 (GAA) contributes to the substrate binding site.

Belongs to the PanD family. In terms of assembly, heterooctamer of four alpha and four beta subunits. The cofactor is pyruvate. Is synthesized initially as an inactive proenzyme, which is activated by self-cleavage at a specific serine bond to produce a beta-subunit with a hydroxyl group at its C-terminus and an alpha-subunit with a pyruvoyl group at its N-terminus.

It localises to the cytoplasm. It catalyses the reaction L-aspartate + H(+) = beta-alanine + CO2. Its pathway is cofactor biosynthesis; (R)-pantothenate biosynthesis; beta-alanine from L-aspartate: step 1/1. Functionally, catalyzes the pyruvoyl-dependent decarboxylation of aspartate to produce beta-alanine. The sequence is that of Aspartate 1-decarboxylase from Campylobacter concisus (strain 13826).